The primary structure comprises 309 residues: 4-hydroxy-3-methylbut-2-enyl diphosphate reductase (309 aa).

Residue cysteine 13 coordinates [4Fe-4S] cluster. (2E)-4-hydroxy-3-methylbut-2-enyl diphosphate contacts are provided by histidine 42 and histidine 75. 2 residues coordinate dimethylallyl diphosphate: histidine 42 and histidine 75. 2 residues coordinate isopentenyl diphosphate: histidine 42 and histidine 75. Residue cysteine 97 participates in [4Fe-4S] cluster binding. Histidine 125 contacts (2E)-4-hydroxy-3-methylbut-2-enyl diphosphate. Histidine 125 is a binding site for dimethylallyl diphosphate. Histidine 125 contacts isopentenyl diphosphate. Catalysis depends on glutamate 127, which acts as the Proton donor. Residue threonine 165 coordinates (2E)-4-hydroxy-3-methylbut-2-enyl diphosphate. Cysteine 195 provides a ligand contact to [4Fe-4S] cluster. (2E)-4-hydroxy-3-methylbut-2-enyl diphosphate is bound by residues serine 223, serine 224, asparagine 225, and serine 267. The dimethylallyl diphosphate site is built by serine 223, serine 224, asparagine 225, and serine 267. The isopentenyl diphosphate site is built by serine 223, serine 224, asparagine 225, and serine 267.

It belongs to the IspH family. It depends on [4Fe-4S] cluster as a cofactor.

It catalyses the reaction isopentenyl diphosphate + 2 oxidized [2Fe-2S]-[ferredoxin] + H2O = (2E)-4-hydroxy-3-methylbut-2-enyl diphosphate + 2 reduced [2Fe-2S]-[ferredoxin] + 2 H(+). The enzyme catalyses dimethylallyl diphosphate + 2 oxidized [2Fe-2S]-[ferredoxin] + H2O = (2E)-4-hydroxy-3-methylbut-2-enyl diphosphate + 2 reduced [2Fe-2S]-[ferredoxin] + 2 H(+). It functions in the pathway isoprenoid biosynthesis; dimethylallyl diphosphate biosynthesis; dimethylallyl diphosphate from (2E)-4-hydroxy-3-methylbutenyl diphosphate: step 1/1. The protein operates within isoprenoid biosynthesis; isopentenyl diphosphate biosynthesis via DXP pathway; isopentenyl diphosphate from 1-deoxy-D-xylulose 5-phosphate: step 6/6. Functionally, catalyzes the conversion of 1-hydroxy-2-methyl-2-(E)-butenyl 4-diphosphate (HMBPP) into a mixture of isopentenyl diphosphate (IPP) and dimethylallyl diphosphate (DMAPP). Acts in the terminal step of the DOXP/MEP pathway for isoprenoid precursor biosynthesis. The polypeptide is 4-hydroxy-3-methylbut-2-enyl diphosphate reductase (Chlamydia felis (strain Fe/C-56) (Chlamydophila felis)).